Consider the following 378-residue polypeptide: Protein RecA (378 aa).

79–86 provides a ligand contact to ATP; that stretch reads GPESSGKT.

The protein belongs to the RecA family.

The protein localises to the cytoplasm. Functionally, can catalyze the hydrolysis of ATP in the presence of single-stranded DNA, the ATP-dependent uptake of single-stranded DNA by duplex DNA, and the ATP-dependent hybridization of homologous single-stranded DNAs. It interacts with LexA causing its activation and leading to its autocatalytic cleavage. The protein is Protein RecA of Streptococcus equi subsp. zooepidemicus (strain H70).